The primary structure comprises 230 residues: Cytidylate kinase (230 aa).

Position 12–20 (12–20 (GPSGAGKGT)) interacts with ATP.

It belongs to the cytidylate kinase family. Type 1 subfamily.

The protein localises to the cytoplasm. The enzyme catalyses CMP + ATP = CDP + ADP. It carries out the reaction dCMP + ATP = dCDP + ADP. The chain is Cytidylate kinase from Shewanella baltica (strain OS223).